The chain runs to 302 residues: Lysosomal thioesterase PPT2 (302 aa).

Positions 1 to 27 (MLGLCGQRLPAAWVLLLLPFLPLLLLA) are cleaved as a signal peptide. N-linked (GlcNAc...) asparagine glycosylation is present at N60. 2 cysteine pairs are disulfide-bonded: C109–C117 and C165–C176. The Nucleophile role is filled by S111. N-linked (GlcNAc...) asparagine glycans are attached at residues N190 and N206. D228 is a catalytic residue. The N-linked (GlcNAc...) asparagine glycan is linked to N245. A disulfide bridge connects residues C276 and C296. Residue H283 is part of the active site. Residue N289 is glycosylated (N-linked (GlcNAc...) asparagine).

The protein belongs to the palmitoyl-protein thioesterase family. Broadly expressed, with highest levels in skeletal muscle.

It localises to the lysosome. The catalysed reaction is hexadecanoyl-CoA + H2O = hexadecanoate + CoA + H(+). It carries out the reaction S-hexadecanoyl-N-acetylcysteamine + H2O = N-acetylcysteamine + hexadecanoate + H(+). Its function is as follows. Catalyzes the cleavage of thioester bonds from S-palmitoyl-CoA or S-palmitoyl-N-acetylcysteamine (unbranched structures) but does not have activity against palmitoylcysteine or palmitoylated proteins, branched structures or bulky head groups. Conversely, hydrolyzes both long and short chain fatty acyl-CoA substrate. Functionally, catalytically inactive due to lack of active site His-283. This Homo sapiens (Human) protein is Lysosomal thioesterase PPT2.